We begin with the raw amino-acid sequence, 1043 residues long: MMPVYMDPSQPCQMRPQEYYYQGFGNNSQHMAMDAPPPCHGSCVHGNFPAYWPPCYPPQVPYHQCCMNRSAFHPPHASYAPSCYVHPPFPVGYQPWFDVEKDVPGKHHCGKCSSQMCDLKKDRGVVIEEHEPEIEKGEAVLPVRSTNCPYPIIWIPHENARNQEYRSSLGLGKHNQPPAEVRAPDNMTIQKSFPESWRGCFPFDESSMKSLVQNQDSKKAQNGKTVEAPFDISKFKSLLQGQDMKEAQIQKNKEELGQLTYPTSWVPSRRKRDDVEASESSNEDRKKMQNGKTVEYPFDISMIKSLIQGQDVKEAQNQKNKEEPGQVPYPIFWIPSYGKRKDVEASESKESSNEGRNLESCPSDLHRNEGQITQAKGKEGNFECNVLSDAEEKSSVINIPVANHLQEPRNIPVKLSENHLPKPTEPTKRIAKNEPVKSTKKEQSSSSSEASKLPPVCLRVDPLPKERNGGSKSVSHPKRMEKSKETKIAAPLSSKKAESRTVPEACNVKCEDANAEMKMAEGSLNALRTEKGSVESNSNLQEESNGEIIKPCEAKENREQPAKKSFTEEEAARIIQSMYRGYDVRRWEPIKKLKEIATVREQMGDVKKRIEALEASTDQHIEEKEIVVNGELVMNLLLKLDAVEGLHPSIREFRKALATELSSIQDKLDSLKNSCASAEKEAVKEQVEIKSQPSDSPVNLEHSQLTEENKMVSDTNLEKVLRLSPEEHPMSVLNRTDEKQAESAAETEEGYGLFETLATDSKQATENAAAASSTTIPEKIGEVETVVPGNPPSADGNGMTVTNVEENKAMVVESLEEPINELPQMVEETETNSIRDPENASEVSEAETNSSENENRKGEDDIVLHSEKNVELSELPVGVIDEETQPLSQDPSSSYTREGNMTAMDPKTASQEETEVDHSPNNSKGIGQQTSEPQDEKEQSPETEVIVKEQPLETEVILNEQAPEPEITEPGISKETKKLMEENQRFKETMETLVKAGREQLEVISKLTSRVKSLEKKLSHKKKTQIRRRASKPMSVSPTDAVL.

5 disordered regions span residues 253-294, 311-331, 343-366, 410-500, and 533-566; these read KEEL…GKTV, DVKE…PYPI, VEAS…SDLH, NIPV…AESR, and SVES…KKSF. Composition is skewed to basic and acidic residues over residues 311 to 324, 343 to 357, 416 to 443, and 478 to 487; these read DVKE…KEEP, VEAS…EGRN, SENH…KKEQ, and KRMEKSKETK. Over residues 534 to 543 the composition is skewed to polar residues; it reads VESNSNLQEE. A compositionally biased stretch (basic and acidic residues) spans 550–566; that stretch reads KPCEAKENREQPAKKSF. One can recognise an IQ domain in the interval 568-597; that stretch reads EEEAARIIQSMYRGYDVRRWEPIKKLKEIA. A BAG domain is found at 595–672; sequence EIATVREQMG…SIQDKLDSLK (78 aa). The span at 724–741 shows a compositional bias: basic and acidic residues; the sequence is SPEEHPMSVLNRTDEKQA. Disordered stretches follow at residues 724–749, 764–799, 817–975, and 1015–1043; these read SPEE…ETEE, ATEN…GNGM, EPIN…ISKE, and EKKL…DAVL. Low complexity predominate over residues 840–852; the sequence is ASEVSEAETNSSE. Residues 853–871 show a composition bias toward basic and acidic residues; sequence NENRKGEDDIVLHSEKNVE. Composition is skewed to polar residues over residues 885 to 899 and 919 to 932; these read QPLS…TREG and SPNN…QTSE. A compositionally biased stretch (basic and acidic residues) spans 934-951; that stretch reads QDEKEQSPETEVIVKEQP. The stretch at 971-1024 forms a coiled coil; sequence GISKETKKLMEENQRFKETMETLVKAGREQLEVISKLTSRVKSLEKKLSHKKKT. The segment covering 1018-1031 has biased composition (basic residues); the sequence is LSHKKKTQIRRRAS. The segment covering 1034-1043 has biased composition (polar residues); it reads MSVSPTDAVL.

In terms of assembly, binds to the ATPase domain of HSP70/HSC70 chaperones. Interacts with calmodulins CAM1, CAM2, CAM3, CAM4, CAM6 and CAM7. Interacts with BAGP1 and APCB1. In terms of tissue distribution, detected in stems, leaves, flowers and roots.

Functionally, co-chaperone that regulates diverse cellular pathways, such as programmed cell death and stress responses. Involved in plant basal resistance. Involved in basal heat response through the regulation of the heat induced small HSP (sHSP) transcriptional cascade. Induces autophagy. This Arabidopsis thaliana (Mouse-ear cress) protein is BAG family molecular chaperone regulator 6.